The sequence spans 88 residues: Small ribosomal subunit protein bS20 (88 aa).

Residues 1-27 (MANSKTAKKRAIQSEKRRQHNASRRSM) are disordered.

Belongs to the bacterial ribosomal protein bS20 family.

Binds directly to 16S ribosomal RNA. This is Small ribosomal subunit protein bS20 from Shewanella amazonensis (strain ATCC BAA-1098 / SB2B).